A 99-amino-acid polypeptide reads, in one-letter code: uncharacterized protein (99 aa).

It localises to the mitochondrion. This is an uncharacterized protein from Marchantia polymorpha (Common liverwort).